A 142-amino-acid polypeptide reads, in one-letter code: Hemoglobin subunit zeta (142 aa).

S2 carries the N-acetylserine modification. In terms of domain architecture, Globin spans 2-142; the sequence is SLTKTERTII…VSSVLTEKYR (141 aa). T29 is subject to Phosphothreonine. A Phosphoserine modification is found at S53. H59 contributes to the heme b binding site. 2 positions are modified to phosphoserine: S73 and S82. H88 contributes to the heme b binding site.

This sequence belongs to the globin family. As to quaternary structure, heterotetramer of two zeta chains and two epsilon chains in early embryonic hemoglobin Gower-1; two zeta chains and two gamma chains in fetal hemoglobin Portland-1. Heterotetramer of two zeta chains and two beta chains in hemoglobin Portland-2, detected in fetuses and neonates with homozygous alpha-thalassemia. As to expression, detected in fetal erythrocytes (at protein level).

In terms of biological role, the zeta chain is an alpha-type chain of mammalian embryonic hemoglobin. The protein is Hemoglobin subunit zeta (HBZ) of Homo sapiens (Human).